The primary structure comprises 125 residues: Cardioactive peptide (125 aa).

Residues 1-22 (MTVSRVCLLLLVALVYLDCCYA) form the signal peptide. Residues 23 to 42 (ASIPRNFDPRLSEEIVMAPK) constitute a propeptide that is removed on maturation. Cys-47 and Cys-53 form a disulfide bridge. Residue Cys-53 is modified to Cysteine amide. The propeptide occupies 57-125 (RSQGPPGMPA…RRKQKEAYIQ (69 aa)).

Abdominal perivisceral organ; major neurohemal release site. Expressed in 116 neurons in post-embryonic central nervous system. Nine pairs of cells are observed in the brain, 4.5 pairs in the subesophageal ganglion, three pairs in each thoracic ganglion (T1-T3), three pairs in the first abdominal ganglion (A1), five pairs each in the second to sixth abdominal ganglia (A2-A6) and 7.5 pairs in the terminal ganglion. Expressed in every ganglion in each post-embryonic stage, except in the thoracic ganglia of first- and second-instar larvae. Colocalizes with CAP2b in median neurosecretory cells during the last larval instar through to adults.

The protein resides in the secreted. Its function is as follows. Cardioregulatory neurohormone that increases heart beat rate during adult wing inflation; has no effect on beat amplitude. The effect of CCAP is both ino- and chronotropic. The sequence is that of Cardioactive peptide from Manduca sexta (Tobacco hawkmoth).